We begin with the raw amino-acid sequence, 415 residues long: Serine hydroxymethyltransferase (415 aa).

Residues leucine 122 and 126–128 contribute to the (6S)-5,6,7,8-tetrahydrofolate site; that span reads GHL. Lysine 230 bears the N6-(pyridoxal phosphate)lysine mark.

It belongs to the SHMT family. In terms of assembly, homodimer. It depends on pyridoxal 5'-phosphate as a cofactor.

Its subcellular location is the cytoplasm. It carries out the reaction (6R)-5,10-methylene-5,6,7,8-tetrahydrofolate + glycine + H2O = (6S)-5,6,7,8-tetrahydrofolate + L-serine. Its pathway is one-carbon metabolism; tetrahydrofolate interconversion. The protein operates within amino-acid biosynthesis; glycine biosynthesis; glycine from L-serine: step 1/1. Functionally, catalyzes the reversible interconversion of serine and glycine with tetrahydrofolate (THF) serving as the one-carbon carrier. This reaction serves as the major source of one-carbon groups required for the biosynthesis of purines, thymidylate, methionine, and other important biomolecules. Also exhibits THF-independent aldolase activity toward beta-hydroxyamino acids, producing glycine and aldehydes, via a retro-aldol mechanism. The protein is Serine hydroxymethyltransferase of Cupriavidus taiwanensis (strain DSM 17343 / BCRC 17206 / CCUG 44338 / CIP 107171 / LMG 19424 / R1) (Ralstonia taiwanensis (strain LMG 19424)).